The sequence spans 180 residues: RNA polymerase sigma-E factor (180 aa).

The short motif at 36–49 (DLLQTALARTYGRW) is the Polymerase core binding element. Residues 130-149 (TEETAAALGMSAGTVKSTLH) constitute a DNA-binding region (H-T-H motif).

The protein belongs to the sigma-70 factor family. ECF subfamily.

Its subcellular location is the cytoplasm. In terms of biological role, sigma factors are initiation factors that promote the attachment of RNA polymerase to specific initiation sites and are then released. This sigma factor is required for the synthesis of the antibiotic actinomycin. The protein is RNA polymerase sigma-E factor (sigE) of Streptomyces antibioticus.